The chain runs to 636 residues: DNA-directed RNA polymerase subunit beta' (636 aa).

Zn(2+)-binding residues include cysteine 70, cysteine 72, cysteine 85, and cysteine 88. The Mg(2+) site is built by aspartate 471, aspartate 473, and aspartate 475.

It belongs to the RNA polymerase beta' chain family. RpoC1 subfamily. Mg(2+) serves as cofactor. The cofactor is Zn(2+).

Its subcellular location is the plastid. It is found in the cyanelle. It catalyses the reaction RNA(n) + a ribonucleoside 5'-triphosphate = RNA(n+1) + diphosphate. DNA-dependent RNA polymerase catalyzes the transcription of DNA into RNA using the four ribonucleoside triphosphates as substrates. The chain is DNA-directed RNA polymerase subunit beta' from Cyanophora paradoxa.